An 88-amino-acid chain; its full sequence is Small ribosomal subunit protein bS20 (88 aa).

The tract at residues 1–27 (MANSKSAKKRALQSEKRRQHNASRRSM) is disordered.

Belongs to the bacterial ribosomal protein bS20 family.

Binds directly to 16S ribosomal RNA. The chain is Small ribosomal subunit protein bS20 from Shewanella sp. (strain ANA-3).